Consider the following 382-residue polypeptide: MLRWTVHLEGGPRRVNHAAVAVGHRVYSFGGYCSGEDYETLRQIDVHIFNAVSLRWTKLPPVRPAVRGQAPVVPYMRYGHSTVLIDDTVFLWGGRNDTEGACNVLYAFDVNTHKWSTPRVSGTVPGARDGHSACVLGKIMYIFGGYEQLADCFSNDIHKLDTSTMTWTLVCTKGNPARWRDFHSATMLGNHMYVFGGRADRFGPFHSNNEIYCNRIRVFDTRTEAWLDCPHTPVLPEGRRSHSAFGYNGELYIFGGYNARLNRHFHDLWKFNPGSFTWKKIEPKGKGPCPRRRQCCCIVGDKIVLFGGTSPSPEEGLGDEFDLIDHSDLHILDFSPSLKTLCKLAVIQYNLDQSCLPHDIRWELNAMTTNSNISRPIVSSHG.

Kelch repeat units lie at residues 25–77 (RVYS…PYMR), 88–138 (TVFL…VLGK), 139–189 (IMYI…TMLG), 191–249 (HMYV…GYNG), and 251–301 (LYIF…IVGD).

Component of a CRL2(KLHDC3) complex, also named ECS(KLHDC3) complex, composed of CUL2, Elongin BC (ELOB and ELOC), RBX1 and substrate-specific adapter KLHDC3. May form oligomers as a KLHDC3-ELOB-ELOC complex; this interaction is likely autoinhibitory for the E3 ligase complex.

Its subcellular location is the cytoplasm. It participates in protein modification; protein ubiquitination. Its function is as follows. Substrate-recognition component of a Cul2-RING (CRL2) E3 ubiquitin-protein ligase complex of the DesCEND (destruction via C-end degrons) pathway, which recognizes a C-degron located at the extreme C terminus of target proteins, leading to their ubiquitination and degradation. The C-degron recognized by the DesCEND pathway is usually a motif of less than ten residues and can be present in full-length proteins, truncated proteins or proteolytically cleaved forms. The CRL2(KLHDC3) complex specifically recognizes proteins with a glycine (Gly) at the C-terminus, leading to their ubiquitination and degradation: recognizes the C-terminal -Arg-(Xaa)n-Arg-Gly, -Arg-(Xaa)n-Lys-Gly, and -Arg-(Xaa)n-Gln-Gly degrons. The CRL2(KLHDC3) complex mediates ubiquitination and degradation of truncated SELENOV and SEPHS2 selenoproteins produced by failed UGA/Sec decoding, which end with a glycine. May be involved in meiotic recombination process. The polypeptide is Kelch domain-containing protein 3 (Rattus norvegicus (Rat)).